Consider the following 96-residue polypeptide: Phosphoribosyl-ATP pyrophosphatase (96 aa).

It belongs to the PRA-PH family.

Its subcellular location is the cytoplasm. It catalyses the reaction 1-(5-phospho-beta-D-ribosyl)-ATP + H2O = 1-(5-phospho-beta-D-ribosyl)-5'-AMP + diphosphate + H(+). Its pathway is amino-acid biosynthesis; L-histidine biosynthesis; L-histidine from 5-phospho-alpha-D-ribose 1-diphosphate: step 2/9. The protein is Phosphoribosyl-ATP pyrophosphatase of Methanococcus maripaludis (strain C6 / ATCC BAA-1332).